The sequence spans 977 residues: Mineralocorticoid receptor (977 aa).

Basic and acidic residues predominate over residues 1–19 (METKGYHSRPEGLDMERRW). 2 disordered regions span residues 1 to 37 (METKGYHSRPEGLDMERRWGQVSQPVDRPSLGPAERT) and 231 to 288 (QGTP…VSSP). Positions 1 to 601 (METKGYHSRP…STGSSRPSKI (601 aa)) are modulating. Positions 231–243 (QGTPLTCSPTVDN) are enriched in polar residues. Phosphoserine occurs at positions 250, 259, 283, 287, and 299. Residues 259 to 288 (SPLSSPLSSMKSPISSPPSHCSVKSPVSSP) are compositionally biased toward low complexity. 2 disordered regions span residues 305–327 (NSRCSVSSPSKANNRSTLSSPAA) and 344–368 (SGASVGSSATRDVIPSPDTHEKGAH). Residues C602, C605, C619, C622, C638, C644, C654, and C657 each coordinate Zn(2+). 2 consecutive NR C4-type zinc fingers follow at residues 602-622 (CLVCGDGASGCHYGVVTCGSC) and 638-662 (CAGRNDCIIDKIRRKNCPACRLQKC). A DNA-binding region (nuclear receptor) is located at residues 602–667 (CLVCGDGASG…RLQKCLQAGM (66 aa)). The hinge stretch occupies residues 668 to 718 (NLGARKSKKLGKLKGLHEEQPQQPPPPQSPEEGTTYIAPAKEPSVNTALVP). The tract at residues 682–703 (GLHEEQPQQPPPPQSPEEGTTY) is disordered. Residues 719–957 (QLSSISRALT…EFPAMLVEII (239 aa)) form the NR LBD domain. Positions 763 and 769 each coordinate 21-hydroxyprogesterone. Aldosterone-binding residues include N763 and Q769. Progesterone-binding residues include N763 and Q769. Residues 775 to 778 (KWAK) are important for coactivator binding. Residues R810 and T938 each coordinate 21-hydroxyprogesterone. Aldosterone is bound by residues R810 and T938. Residues R810 and T938 each contribute to the progesterone site.

Belongs to the nuclear hormone receptor family. NR3 subfamily.

The protein resides in the cytoplasm. It localises to the nucleus. Functionally, receptor for both mineralocorticoids (MC) such as aldosterone and glucocorticoids (GC) such as corticosterone or cortisol. Binds to mineralocorticoid response elements (MRE) and transactivates target genes. The effect of MC is to increase ion and water transport and thus raise extracellular fluid volume and blood pressure and lower potassium levels. The polypeptide is Mineralocorticoid receptor (NR3C2) (Tupaia belangeri (Common tree shrew)).